The following is a 224-amino-acid chain: Protein HLJ1 (224 aa).

Residues 18-87 enclose the J domain; sequence DKHEFYEILK…RSIYDRIGRD (70 aa). Residues 84–93 show a composition bias toward basic and acidic residues; it reads IGRDPDDRQM. The segment at 84–107 is disordered; sequence IGRDPDDRQMPSRGAASGFRGSAG. Phosphoserine is present on Ser109. The disordered stretch occupies residues 173–192; that stretch reads NRGGSPFMRQQPRSRQQQQQ. Positions 181–192 are enriched in low complexity; it reads RQQPRSRQQQQQ.

In Saccharomyces cerevisiae (strain ATCC 204508 / S288c) (Baker's yeast), this protein is Protein HLJ1 (HLJ1).